Consider the following 92-residue polypeptide: Large ribosomal subunit protein eL31 (92 aa).

It belongs to the eukaryotic ribosomal protein eL31 family.

The sequence is that of Large ribosomal subunit protein eL31 from Haloquadratum walsbyi (strain DSM 16790 / HBSQ001).